Reading from the N-terminus, the 563-residue chain is Arginine--tRNA ligase (563 aa).

Positions 121–131 match the 'HIGH' region motif; it reads PNIAKPFSIGH.

Belongs to the class-I aminoacyl-tRNA synthetase family. In terms of assembly, monomer.

The protein localises to the cytoplasm. It catalyses the reaction tRNA(Arg) + L-arginine + ATP = L-arginyl-tRNA(Arg) + AMP + diphosphate. This Streptococcus agalactiae serotype III (strain NEM316) protein is Arginine--tRNA ligase.